A 503-amino-acid chain; its full sequence is ATP synthase subunit alpha (503 aa).

170 to 177 (GDRQTGKT) serves as a coordination point for ATP.

It belongs to the ATPase alpha/beta chains family. In terms of assembly, F-type ATPases have 2 components, CF(1) - the catalytic core - and CF(0) - the membrane proton channel. CF(1) has five subunits: alpha(3), beta(3), gamma(1), delta(1), epsilon(1). CF(0) has three main subunits: a(1), b(2) and c(9-12). The alpha and beta chains form an alternating ring which encloses part of the gamma chain. CF(1) is attached to CF(0) by a central stalk formed by the gamma and epsilon chains, while a peripheral stalk is formed by the delta and b chains.

The protein resides in the cell inner membrane. It carries out the reaction ATP + H2O + 4 H(+)(in) = ADP + phosphate + 5 H(+)(out). Functionally, produces ATP from ADP in the presence of a proton gradient across the membrane. The alpha chain is a regulatory subunit. This chain is ATP synthase subunit alpha, found in Geobacter metallireducens (strain ATCC 53774 / DSM 7210 / GS-15).